We begin with the raw amino-acid sequence, 132 residues long: Large ribosomal subunit protein bL12 (132 aa).

Belongs to the bacterial ribosomal protein bL12 family. As to quaternary structure, homodimer. Part of the ribosomal stalk of the 50S ribosomal subunit. Forms a multimeric L10(L12)X complex, where L10 forms an elongated spine to which 2 to 4 L12 dimers bind in a sequential fashion. Binds GTP-bound translation factors.

Its function is as follows. Forms part of the ribosomal stalk which helps the ribosome interact with GTP-bound translation factors. Is thus essential for accurate translation. This Chloroflexus aggregans (strain MD-66 / DSM 9485) protein is Large ribosomal subunit protein bL12.